Consider the following 581-residue polypeptide: Invertase (581 aa).

Residues 1-22 form the signal peptide; it reads MFLKYILASGICLVSLLSSTNA. 6 N-linked (GlcNAc...) asparagine glycosylation sites follow: asparagine 37, asparagine 40, asparagine 46, asparagine 57, asparagine 62, and asparagine 79. Residues 94-97, glutamine 113, and 158-159 each bind substrate; these read FMND and FS. Aspartate 97 is an active-site residue. N-linked (GlcNAc...) asparagine glycans are attached at residues asparagine 168 and asparagine 175. Residues 227-228 and glutamate 280 contribute to the substrate site; that span reads RD. Asparagine 322 is a glycosylation site (N-linked (GlcNAc...) asparagine). Residue tryptophan 366 participates in substrate binding. 7 N-linked (GlcNAc...) asparagine glycosylation sites follow: asparagine 399, asparagine 409, asparagine 425, asparagine 446, asparagine 452, asparagine 519, and asparagine 569.

It belongs to the glycosyl hydrolase 32 family. In terms of processing, glycosylated; contains 67% carbohydrates. This is composed of equimolar amounts of mannose and galactose. There is also a small amount of glucosamine present.

The enzyme catalyses Hydrolysis of terminal non-reducing beta-D-fructofuranoside residues in beta-D-fructofuranosides.. The protein is Invertase (inv1) of Schizosaccharomyces pombe (strain 972 / ATCC 24843) (Fission yeast).